We begin with the raw amino-acid sequence, 247 residues long: Ribonuclease 3 (247 aa).

Positions 21–149 constitute an RNase III domain; that stretch reads LQKLSKKIGI…LVGAIYLDQG (129 aa). Position 62 (Glu-62) interacts with Mg(2+). Residue Asp-66 is part of the active site. The Mg(2+) site is built by Asn-135 and Glu-138. Glu-138 is an active-site residue. The 70-residue stretch at 176–245 folds into the DRBM domain; that stretch reads DYKTQLQEYS…AKELYNRIRK (70 aa).

Belongs to the ribonuclease III family. In terms of assembly, homodimer. Requires Mg(2+) as cofactor.

It is found in the cytoplasm. It catalyses the reaction Endonucleolytic cleavage to 5'-phosphomonoester.. In terms of biological role, digests double-stranded RNA. Involved in the processing of primary rRNA transcript to yield the immediate precursors to the large and small rRNAs (23S and 16S). Processes some mRNAs, and tRNAs when they are encoded in the rRNA operon. Processes pre-crRNA and tracrRNA of type II CRISPR loci if present in the organism. This is Ribonuclease 3 from Leptospira interrogans serogroup Icterohaemorrhagiae serovar copenhageni (strain Fiocruz L1-130).